The primary structure comprises 266 residues: Oxidoreductase aflX (266 aa).

Belongs to the avfA family.

It functions in the pathway mycotoxin biosynthesis; aflatoxin biosynthesis. Its function is as follows. Oxidoreductase; part of the gene cluster that mediates the biosynthesis of aflatoxins, a group of polyketide-derived furanocoumarins, and part of the most toxic and carcinogenic compounds among the known mycotoxins. The four major aflatoxins produced by A.parasiticus are aflatoxin B1 (AFB1), aflatoxin B2 (AFB2), aflatoxin G1 (AFG1) and aflatoxin G2 (AFG2). Within the aflatoxin pathway, the oxidoreductase aflX seems to be involved in the conversion of versicolorin A (VERA) to demethylsterigmatocystin (DMST), through probable epoxide ring-opening step following versicolorin A oxidation required for the formation of the xanthone ring. The biosynthesis of aflatoxins begins with the norsolorinic acid synthase aflC that combines a hexanoyl starter unit produced by the fatty acid synthase aflA/aflB and 7 malonyl-CoA extender units to synthesize the precursor NOR. The second step is the conversion of NOR to averantin and requires the norsolorinic acid ketoreductase aflD, which catalyzes the dehydration of norsolorinic acid to form (1'S)-averantin. The norsolorinic acid reductases aflE and aflF may also play a role in the conversion of NOR to AVN. The cytochrome P450 monooxygenase aflG then catalyzes the hydroxylation of AVN to 5'hydroxyaverantin (HAVN). The next step is performed by the 5'-hydroxyaverantin dehydrogenase aflH that transforms HAVN to 5'-oxoaverantin (OAVN) which is further converted to averufin (AVF) by aflK that plays a dual role in the pathway, as a 5'-oxoaverantin cyclase that mediates conversion of 5'-oxoaverantin, as well as a versicolorin B synthase in a later step in the pathway. The averufin oxidase aflI catalyzes the conversion of AVF to versiconal hemiacetal acetate (VHA). VHA is then the substrate for the versiconal hemiacetal acetate esterase aflJ to yield versiconal (VAL). Versicolorin B synthase aflK then converts VAL to versicolorin B (VERB) by closing the bisfuran ring of aflatoxin which is required for DNA-binding, thus giving to aflatoxin its activity as a mutagen. Then, the activity of the versicolorin B desaturase aflL leads to versicolorin A (VERA). A branch point starts from VERB since it can also be converted to dihydrodemethylsterigmatocystin (DMDHST), probably also by aflL, VERA being a precursor for aflatoxins B1 and G1, and DMDHST for aflatoxins B2 and G2. Next, the versicolorin reductase aflM and the cytochrome P450 monooxygenase aflN are involved in conversion of VERA to demethylsterigmatocystin (DMST). AflX and aflY seem also involved in this step, through probable aflX-mediated epoxide ring-opening step following versicolorin A oxidation and aflY-mediated Baeyer-Villiger oxidation required for the formation of the xanthone ring. The methyltransferase aflO then leads to the modification of DMST to sterigmatocystin (ST), and of DMDHST to dihydrosterigmatocystin (DHST). Both ST and DHST are then substrates of the O-methyltransferase aflP to yield O-methylsterigmatocystin (OMST) and dihydro-O-methylsterigmatocystin (DHOMST), respectively. Finally OMST is converted to aflatoxins B1 and G1, and DHOMST to aflatoxins B2 and G2, via the action of several enzymes including O-methylsterigmatocystin oxidoreductase aflQ, the cytochrome P450 monooxygenase aflU, but also the NADH-dependent flavin oxidoreductase nadA which is specifically required for the synthesis of AFG1. In Aspergillus parasiticus (strain ATCC 56775 / NRRL 5862 / SRRC 143 / SU-1), this protein is Oxidoreductase aflX.